We begin with the raw amino-acid sequence, 194 residues long: RNA polymerase II subunit A C-terminal domain phosphatase SSU72 like protein 2 (194 aa).

It belongs to the SSU72 phosphatase family.

It localises to the nucleus. The enzyme catalyses O-phospho-L-seryl-[protein] + H2O = L-seryl-[protein] + phosphate. It catalyses the reaction O-phospho-L-threonyl-[protein] + H2O = L-threonyl-[protein] + phosphate. Protein phosphatase that catalyzes the dephosphorylation of the C-terminal domain of RNA polymerase II. Plays a role in RNA processing and termination. The chain is RNA polymerase II subunit A C-terminal domain phosphatase SSU72 like protein 2 from Homo sapiens (Human).